The chain runs to 203 residues: MIIKENSDKQTQIYNFLIEFTKSKGYPPSVREICQAVSLKSTSTVHGHLKRLEKKGLIYRDPTKPRALEIVELSNEEKELIDIPIVGKVTAGMPILATENIEDMFQIPINYVKHNNDLFILKVTGDSMIEAGILDGDLAIIEQKNVATNGDIVVALIENEATIKRFFKENGFIRLQPENKNYEPIIVEDCSILGKLVGIYRAY.

Positions 30–50 form a DNA-binding region, H-T-H motif; it reads VREICQAVSLKSTSTVHGHLK. Catalysis depends on for autocatalytic cleavage activity residues S127 and K164.

It belongs to the peptidase S24 family. Homodimer.

The catalysed reaction is Hydrolysis of Ala-|-Gly bond in repressor LexA.. Functionally, represses a number of genes involved in the response to DNA damage (SOS response), including recA and lexA. In the presence of single-stranded DNA, RecA interacts with LexA causing an autocatalytic cleavage which disrupts the DNA-binding part of LexA, leading to derepression of the SOS regulon and eventually DNA repair. The chain is LexA repressor from Clostridium perfringens (strain ATCC 13124 / DSM 756 / JCM 1290 / NCIMB 6125 / NCTC 8237 / Type A).